Reading from the N-terminus, the 344-residue chain is GTPase Obg (344 aa).

Residues Met1 to Ile159 enclose the Obg domain. An OBG-type G domain is found at Ala160 to Asp327. GTP contacts are provided by residues Gly166 to Ser173, Phe191 to His195, Asp212 to Gly215, Asn279 to Asp282, and Ser308 to Ala310. Mg(2+) is bound by residues Ser173 and Thr193.

Belongs to the TRAFAC class OBG-HflX-like GTPase superfamily. OBG GTPase family. Monomer. Mg(2+) is required as a cofactor.

The protein localises to the cytoplasm. In terms of biological role, an essential GTPase which binds GTP, GDP and possibly (p)ppGpp with moderate affinity, with high nucleotide exchange rates and a fairly low GTP hydrolysis rate. Plays a role in control of the cell cycle, stress response, ribosome biogenesis and in those bacteria that undergo differentiation, in morphogenesis control. This is GTPase Obg from Ruegeria pomeroyi (strain ATCC 700808 / DSM 15171 / DSS-3) (Silicibacter pomeroyi).